We begin with the raw amino-acid sequence, 585 residues long: 4-hydroxy-3-methylbut-2-en-1-yl diphosphate synthase (flavodoxin) (585 aa).

Residues Cys492, Cys495, Cys526, and Glu533 each coordinate [4Fe-4S] cluster.

Belongs to the IspG family. [4Fe-4S] cluster serves as cofactor.

It catalyses the reaction (2E)-4-hydroxy-3-methylbut-2-enyl diphosphate + oxidized [flavodoxin] + H2O + 2 H(+) = 2-C-methyl-D-erythritol 2,4-cyclic diphosphate + reduced [flavodoxin]. It participates in isoprenoid biosynthesis; isopentenyl diphosphate biosynthesis via DXP pathway; isopentenyl diphosphate from 1-deoxy-D-xylulose 5-phosphate: step 5/6. Converts 2C-methyl-D-erythritol 2,4-cyclodiphosphate (ME-2,4cPP) into 1-hydroxy-2-methyl-2-(E)-butenyl 4-diphosphate. This is 4-hydroxy-3-methylbut-2-en-1-yl diphosphate synthase (flavodoxin) from Akkermansia muciniphila (strain ATCC BAA-835 / DSM 22959 / JCM 33894 / BCRC 81048 / CCUG 64013 / CIP 107961 / Muc).